The following is a 58-amino-acid chain: Large ribosomal subunit protein uL30 (58 aa).

This sequence belongs to the universal ribosomal protein uL30 family. Part of the 50S ribosomal subunit.

The polypeptide is Large ribosomal subunit protein uL30 (Cytophaga hutchinsonii (strain ATCC 33406 / DSM 1761 / CIP 103989 / NBRC 15051 / NCIMB 9469 / D465)).